The chain runs to 296 residues: Elongation factor Ts (296 aa).

Positions 82 to 85 (TDFV) are involved in Mg(2+) ion dislocation from EF-Tu.

It belongs to the EF-Ts family.

The protein localises to the cytoplasm. In terms of biological role, associates with the EF-Tu.GDP complex and induces the exchange of GDP to GTP. It remains bound to the aminoacyl-tRNA.EF-Tu.GTP complex up to the GTP hydrolysis stage on the ribosome. The chain is Elongation factor Ts from Aromatoleum aromaticum (strain DSM 19018 / LMG 30748 / EbN1) (Azoarcus sp. (strain EbN1)).